The chain runs to 295 residues: 33 kDa chaperonin (295 aa).

2 disulfide bridges follow: C237/C239 and C270/C273.

The protein belongs to the HSP33 family. Under oxidizing conditions two disulfide bonds are formed involving the reactive cysteines. Under reducing conditions zinc is bound to the reactive cysteines and the protein is inactive.

The protein localises to the cytoplasm. Redox regulated molecular chaperone. Protects both thermally unfolding and oxidatively damaged proteins from irreversible aggregation. Plays an important role in the bacterial defense system toward oxidative stress. This chain is 33 kDa chaperonin, found in Lactiplantibacillus plantarum (strain ATCC BAA-793 / NCIMB 8826 / WCFS1) (Lactobacillus plantarum).